The chain runs to 577 residues: Arginine--tRNA ligase (577 aa).

The 'HIGH' region signature appears at 122-132; it reads PNVAKEMHVGH.

This sequence belongs to the class-I aminoacyl-tRNA synthetase family. Monomer.

Its subcellular location is the cytoplasm. It catalyses the reaction tRNA(Arg) + L-arginine + ATP = L-arginyl-tRNA(Arg) + AMP + diphosphate. In Escherichia coli O6:K15:H31 (strain 536 / UPEC), this protein is Arginine--tRNA ligase.